The chain runs to 143 residues: Nucleoside diphosphate kinase (143 aa).

Residues Lys11, Phe59, Arg87, Thr93, Arg104, and Asn114 each contribute to the ATP site. His117 (pros-phosphohistidine intermediate) is an active-site residue.

Belongs to the NDK family. As to quaternary structure, homotetramer. Mg(2+) serves as cofactor.

It is found in the cytoplasm. The catalysed reaction is a 2'-deoxyribonucleoside 5'-diphosphate + ATP = a 2'-deoxyribonucleoside 5'-triphosphate + ADP. It catalyses the reaction a ribonucleoside 5'-diphosphate + ATP = a ribonucleoside 5'-triphosphate + ADP. In terms of biological role, major role in the synthesis of nucleoside triphosphates other than ATP. The ATP gamma phosphate is transferred to the NDP beta phosphate via a ping-pong mechanism, using a phosphorylated active-site intermediate. The sequence is that of Nucleoside diphosphate kinase from Stutzerimonas stutzeri (strain A1501) (Pseudomonas stutzeri).